The sequence spans 80 residues: Sec-independent protein translocase protein TatA (80 aa).

Residues 1–21 (MGQIGIWQILIIALVILVLFG) traverse the membrane as a helical segment. The disordered stretch occupies residues 38–80 (SFKKGLNEEDKPAEPAAKIEGPSHEAKPAGEAAKDPRPADKQG). A compositionally biased stretch (basic and acidic residues) spans 58–80 (GPSHEAKPAGEAAKDPRPADKQG).

The protein belongs to the TatA/E family. In terms of assembly, the Tat system comprises two distinct complexes: a TatABC complex, containing multiple copies of TatA, TatB and TatC subunits, and a separate TatA complex, containing only TatA subunits. Substrates initially bind to the TatABC complex, which probably triggers association of the separate TatA complex to form the active translocon.

It localises to the cell inner membrane. Its function is as follows. Part of the twin-arginine translocation (Tat) system that transports large folded proteins containing a characteristic twin-arginine motif in their signal peptide across membranes. TatA could form the protein-conducting channel of the Tat system. The sequence is that of Sec-independent protein translocase protein TatA from Erythrobacter litoralis (strain HTCC2594).